The primary structure comprises 4471 residues: Dynein axonemal heavy chain 10 (4471 aa).

The stem stretch occupies residues Met-1–Gly-1793. The tract at residues Thr-46 to Ser-65 is disordered. 4 coiled-coil regions span residues Asn-203–Lys-223, Gln-602–Lys-622, Lys-1071–Lys-1106, and Val-1217–Asp-1245. Residue Asn-1074 is glycosylated (N-linked (GlcNAc...) asparagine). The stretch at Gly-1221–Leu-1254 is one TPR 1 repeat. AAA regions lie at residues Tyr-1794 to Met-2015, Asp-2075 to Glu-2294, Ile-2417 to Gly-2665, and Glu-2765 to Ser-3014. Positions Gly-1832–Thr-1839 match the GPAGTGKT motif motif. Gly-1832 to Thr-1839 contacts ATP. The short motif at Cys-1882–Arg-1888 is the CFDEFNR motif element. Residues Gly-2113–Ser-2120 and Gly-2455–Thr-2462 each bind ATP. TPR repeat units follow at residues Met-2736–Ser-2769 and Thr-2771–Gly-2797. Residues Glu-2747 to Asn-2770 are a coiled coil. ATP is bound at residue Gly-2803–Gln-2810. The segment at Tyr-3029 to Met-3313 is stalk. Coiled coils occupy residues Lys-3045–Val-3131, Lys-3257–Leu-3327, and Glu-3567–Ala-3638. The tract at residues Leu-3399 to Glu-3629 is AAA 5. The stretch at Trp-3802–Arg-3837 is one TPR 4 repeat. An AAA 6 region spans residues Val-3845–Thr-4062. The TPR 5 repeat unit spans residues Arg-4074–Glu-4108. Residues Leu-4235–Leu-4260 adopt a coiled-coil conformation.

Belongs to the dynein heavy chain family. Consists of at least two heavy chains and a number of intermediate and light chains. In terms of tissue distribution, expressed primarily in trachea and testis, 2 tissues containing axonemal structures. Also expressed in brain but not in adult heart.

The protein resides in the cytoplasm. It localises to the cytoskeleton. The protein localises to the cilium axoneme. Its function is as follows. Force generating protein of respiratory cilia. Produces force towards the minus ends of microtubules. Dynein has ATPase activity; the force-producing power stroke is thought to occur on release of ADP. Involved in sperm motility; implicated in sperm flagellar assembly. Probable inner arm dynein heavy chain. The chain is Dynein axonemal heavy chain 10 (DNAH10) from Homo sapiens (Human).